The following is a 434-amino-acid chain: Nicotinate phosphoribosyltransferase (434 aa).

His242 is subject to Phosphohistidine; by autocatalysis.

This sequence belongs to the NAPRTase family. In terms of processing, transiently phosphorylated on a His residue during the reaction cycle. Phosphorylation strongly increases the affinity for substrates and increases the rate of nicotinate D-ribonucleotide production. Dephosphorylation regenerates the low-affinity form of the enzyme, leading to product release.

The catalysed reaction is nicotinate + 5-phospho-alpha-D-ribose 1-diphosphate + ATP + H2O = nicotinate beta-D-ribonucleotide + ADP + phosphate + diphosphate. Its pathway is cofactor biosynthesis; NAD(+) biosynthesis; nicotinate D-ribonucleotide from nicotinate: step 1/1. Catalyzes the synthesis of beta-nicotinate D-ribonucleotide from nicotinate and 5-phospho-D-ribose 1-phosphate at the expense of ATP. The chain is Nicotinate phosphoribosyltransferase from Allorhizobium ampelinum (strain ATCC BAA-846 / DSM 112012 / S4) (Agrobacterium vitis (strain S4)).